Here is a 667-residue protein sequence, read N- to C-terminus: Sterile alpha motif domain-containing protein 15 (667 aa).

The span at 1–18 shows a compositional bias: acidic residues; it reads MAEVPEDYDSGPDEDGEP. 2 disordered regions span residues 1-108 and 147-424; these read MAEV…KSER and SAME…IKSK. Composition is skewed to basic and acidic residues over residues 19 to 53, 84 to 93, 187 to 196, and 228 to 266; these read ESERPELHKSYENAERDTMAEADSKLPAEIYHEPQ, IAKESKRDVP, ESLRVQHEET, and TKPDIPEETQRESTEKKRTEPPEQARPEFPEKEPRKSSE. A compositionally biased stretch (acidic residues) spans 268 to 277; it reads AGLEPPEETQ. Basic and acidic residues-rich tracts occupy residues 284–314, 322–338, 346–364, and 381–422; these read MQRKATEEKGTELPERTKPDLPDHKSRKSTD, EEIKLEFPEEESRKPNE, EMMKPESPEEIRKSNEEKN, and PRVE…EPIK. Residues 538–601 form the SAM domain; that stretch reads WDPEKVAEWI…SRHTRELLEI (64 aa).

The polypeptide is Sterile alpha motif domain-containing protein 15 (SAMD15) (Macaca fascicularis (Crab-eating macaque)).